Here is a 212-residue protein sequence, read N- to C-terminus: Peptide methionine sulfoxide reductase MsrA (212 aa).

Cysteine 52 is a catalytic residue.

Belongs to the MsrA Met sulfoxide reductase family.

It catalyses the reaction L-methionyl-[protein] + [thioredoxin]-disulfide + H2O = L-methionyl-(S)-S-oxide-[protein] + [thioredoxin]-dithiol. The enzyme catalyses [thioredoxin]-disulfide + L-methionine + H2O = L-methionine (S)-S-oxide + [thioredoxin]-dithiol. Functionally, has an important function as a repair enzyme for proteins that have been inactivated by oxidation. Catalyzes the reversible oxidation-reduction of methionine sulfoxide in proteins to methionine. The protein is Peptide methionine sulfoxide reductase MsrA of Escherichia coli O127:H6 (strain E2348/69 / EPEC).